The following is a 132-amino-acid chain: UPF0102 protein LI0223 (132 aa).

This sequence belongs to the UPF0102 family.

The polypeptide is UPF0102 protein LI0223 (Lawsonia intracellularis (strain PHE/MN1-00)).